The sequence spans 779 residues: Pleckstrin homology domain-containing family A member 4 (779 aa).

Positions 54 to 153 (PVHIRGWLHK…WLRALGRASR (100 aa)) constitute a PH domain. 3 disordered regions span residues 152–352 (SRAE…LPGP), 492–670 (AGLG…EGHR), and 691–764 (MTGG…LPQD). Position 164 is a phosphoserine (Ser164). Positions 184–193 (SRGEEGRISE) are enriched in basic and acidic residues. The span at 315-332 (QHWSQEPRTQAHSGSPTY) shows a compositional bias: polar residues. The span at 525 to 535 (PESLELSSPRS) shows a compositional bias: low complexity. Over residues 536 to 551 (PETDWGRPPGGDKDLA) the composition is skewed to basic and acidic residues. Position 559 is a phosphoserine (Ser559). Positions 594 to 603 (QLERMRRNQE) are enriched in basic and acidic residues. Polar residues predominate over residues 647–663 (LRSSGSWSSPRNTTPYL). The span at 704–724 (PGVPLPPSDPTRQETPPPRSP) shows a compositional bias: pro residues.

In terms of tissue distribution, highly expressed in melanoma. Detected at low levels in heart, skeletal muscle, kidney, liver and small intestine.

It is found in the cytoplasm. It localises to the membrane. Functionally, binds specifically to phosphatidylinositol 3-phosphate (PtdIns3P), but not to other phosphoinositides. This chain is Pleckstrin homology domain-containing family A member 4 (PLEKHA4), found in Homo sapiens (Human).